Reading from the N-terminus, the 243-residue chain is Probable transcriptional regulator ycf27 (243 aa).

The Response regulatory domain occupies 7 to 120; the sequence is KILVVDDEAS…ELEARIRSVL (114 aa). 4-aspartylphosphate is present on aspartate 56. A DNA-binding region (H-T-H motif) is located at residues 76–94; that stretch reads DVPIIMLTALGEVCDRITG. The ompR/PhoB-type DNA-binding region spans 135–236; sequence SGIISIGFLK…ARGTGYLFQR (102 aa).

The protein localises to the plastid. It is found in the chloroplast. In terms of biological role, probable promoter-specific protein mediating the interaction between DNA and RNA polymerase. This Pyropia yezoensis (Susabi-nori) protein is Probable transcriptional regulator ycf27 (ycf27).